A 456-amino-acid chain; its full sequence is Gamma-glutamyl phosphate reductase (456 aa).

An N-acetylserine modification is found at Ser2.

The protein belongs to the gamma-glutamyl phosphate reductase family.

It catalyses the reaction L-glutamate 5-semialdehyde + phosphate + NADP(+) = L-glutamyl 5-phosphate + NADPH + H(+). Its pathway is amino-acid biosynthesis; L-proline biosynthesis; L-glutamate 5-semialdehyde from L-glutamate: step 2/2. In terms of biological role, catalyzes the NADPH dependent reduction of L-gamma-glutamyl 5-phosphate into L-glutamate 5-semialdehyde and phosphate. The product spontaneously undergoes cyclization to form 1-pyrroline-5-carboxylate. This Saccharomyces cerevisiae (strain ATCC 204508 / S288c) (Baker's yeast) protein is Gamma-glutamyl phosphate reductase (PRO2).